The sequence spans 430 residues: Aspartate aminotransferase, mitochondrial (430 aa).

The N-terminal 29 residues, 1–29 (MALLHSGRVLSGVASAFHPGLAAAASARA), are a transit peptide targeting the mitochondrion. Residue threonine 48 is modified to Phosphothreonine. Residue lysine 59 is modified to N6-acetyllysine. Substrate is bound at residue glycine 65. Lysine 73 is modified (N6-acetyllysine; alternate). Lysine 73 carries the N6-succinyllysine; alternate modification. Lysine 82 carries the post-translational modification N6-acetyllysine. Lysine 90 is modified (N6-acetyllysine; alternate). N6-succinyllysine; alternate is present on lysine 90. At tyrosine 96 the chain carries 3'-nitrotyrosine; alternate. At tyrosine 96 the chain carries Phosphotyrosine; alternate. N6-acetyllysine; alternate is present on residues lysine 107, lysine 122, and lysine 159. N6-succinyllysine; alternate is present on residues lysine 107, lysine 122, and lysine 159. Tryptophan 162 provides a ligand contact to substrate. At lysine 185 the chain carries N6-acetyllysine; alternate. N6-succinyllysine; alternate is present on lysine 185. Asparagine 215 contacts substrate. Lysine 227 carries the post-translational modification N6-succinyllysine. At lysine 234 the chain carries N6-acetyllysine. N6-acetyllysine; alternate is present on residues lysine 279 and lysine 296. Position 279 is an N6-(pyridoxal phosphate)lysine; alternate (lysine 279). Lysine 296 is modified (N6-succinyllysine; alternate). Lysine 302 is modified (N6-acetyllysine). Lysine 309 carries the post-translational modification N6-acetyllysine; alternate. Residue lysine 309 is modified to N6-succinyllysine; alternate. At arginine 313 the chain carries Asymmetric dimethylarginine. An N6-acetyllysine modification is found at lysine 345. Lysine 363 is subject to N6-acetyllysine; alternate. N6-succinyllysine; alternate is present on lysine 363. 2 positions are modified to N6-acetyllysine: lysine 364 and lysine 387. An N6-acetyllysine; alternate mark is found at lysine 396 and lysine 404. An N6-succinyllysine; alternate mark is found at lysine 396 and lysine 404. Arginine 407 is a binding site for substrate.

Belongs to the class-I pyridoxal-phosphate-dependent aminotransferase family. In terms of assembly, homodimer. Pyridoxal 5'-phosphate serves as cofactor.

It localises to the mitochondrion matrix. Its subcellular location is the cell membrane. It carries out the reaction L-aspartate + 2-oxoglutarate = oxaloacetate + L-glutamate. It catalyses the reaction L-kynurenine + 2-oxoglutarate = kynurenate + L-glutamate + H2O. In terms of biological role, catalyzes the irreversible transamination of the L-tryptophan metabolite L-kynurenine to form kynurenic acid (KA). As a member of the malate-aspartate shuttle, it has a key role in the intracellular NAD(H) redox balance. Is important for metabolite exchange between mitochondria and cytosol, and for amino acid metabolism. Facilitates cellular uptake of long-chain free fatty acids. The chain is Aspartate aminotransferase, mitochondrial (GOT2) from Sus scrofa (Pig).